The primary structure comprises 611 residues: Aspartate--tRNA(Asp/Asn) ligase (611 aa).

Residue Glu-177 participates in L-aspartate binding. The interval 201–204 is aspartate; that stretch reads QLFK. Arg-223 contributes to the L-aspartate binding site. Residues 223–225 and Gln-232 contribute to the ATP site; that span reads RDE. Residue His-461 participates in L-aspartate binding. Glu-499 contributes to the ATP binding site. Residue Arg-506 participates in L-aspartate binding. An ATP-binding site is contributed by 551–554; that stretch reads GVDR.

Belongs to the class-II aminoacyl-tRNA synthetase family. Type 1 subfamily. As to quaternary structure, homodimer.

Its subcellular location is the cytoplasm. The enzyme catalyses tRNA(Asx) + L-aspartate + ATP = L-aspartyl-tRNA(Asx) + AMP + diphosphate. In terms of biological role, aspartyl-tRNA synthetase with relaxed tRNA specificity since it is able to aspartylate not only its cognate tRNA(Asp) but also tRNA(Asn). Reaction proceeds in two steps: L-aspartate is first activated by ATP to form Asp-AMP and then transferred to the acceptor end of tRNA(Asp/Asn). The protein is Aspartate--tRNA(Asp/Asn) ligase of Synechococcus sp. (strain WH7803).